The chain runs to 135 residues: Protein NrdI (135 aa).

It belongs to the NrdI family.

Its function is as follows. Probably involved in ribonucleotide reductase function. The polypeptide is Protein NrdI (Brucella abortus (strain S19)).